Reading from the N-terminus, the 624-residue chain is DNA mismatch repair protein MutL (624 aa).

Residues 336–357 (GEGFHETSDSFSSRSSQHSDAR) form a disordered region. Residues 344 to 353 (DSFSSRSSQH) are compositionally biased toward low complexity.

It belongs to the DNA mismatch repair MutL/HexB family.

In terms of biological role, this protein is involved in the repair of mismatches in DNA. It is required for dam-dependent methyl-directed DNA mismatch repair. May act as a 'molecular matchmaker', a protein that promotes the formation of a stable complex between two or more DNA-binding proteins in an ATP-dependent manner without itself being part of a final effector complex. The chain is DNA mismatch repair protein MutL from Chlorobium phaeobacteroides (strain BS1).